We begin with the raw amino-acid sequence, 194 residues long: MADQQQNPQESELLLTSAGYVSTFPAPGLRRTVRHITGHNAEGKGVFIQTDCGDHHRIIGNEQALANIIYSTKETPVEMNGDVDLKYAKENEPPLHIHNGSVCRMIDFAPNVISPMHRAVSLDYGIVIEGEFKLILDSGESRIMRQGDVSVQRASAHQWHNITGNGTLPGRMMWVLLDCKPIVINDIDFMECSQ.

Residues 106–175 form the Cupin type-2 domain; the sequence is IDFAPNVISP…GTLPGRMMWV (70 aa).

It belongs to the virC family.

The protein operates within secondary metabolite biosynthesis. Its function is as follows. Cupin-domain-containing oxidoreductase; part of the gene cluster that mediates the biosynthesis of virensols and trichoxide, fungal natural products that contain or are derived from a salicylaldehyde core. The pathway begins with the synthesis of the reduced chain in virensol C by the highly reducing polyketide synthase virA via condensation of one acetate and 8 malonate units. VirA has interesting programming rules since the first 2 ketides are fully reduced, the 3 following ketides undergo beta-dehydration, and the last 3 ketides are only reduced to beta-hydroxys to yield the trihydroxy portion. The production of aldehyde virensol C by virA alone is surprising, since virA does not contain a reductase (R) domain that is typically associated with reductive product release in HRPKS. The cupin-domain enzyme virC is involved in enhancing virA product turnover. The short-chain dehydrogenase virB then oxidizes the C-7 alcohol of virensol C to a ketone, yielding virensol D. Virensol D is further transformed to salicylaldehyde 5-deoxyaurocitrin by the short-chain dehydrogenase virD. VirD catalyzes the dehydrogenation of C-3 to form the beta-ketone aldehyde, which is followed by the generation of the nucleophilic C-2 that is required for the intramolecular aldol condensation between C-2 and C-7, itself followed by dehydration and aromatization which leads to salicylaldehyde 5-deoxyaurocitrin. While the dehydrogenation of virensol D is definitely catalyzed by virD, the aldol condensation and dehydration may be uncatalyzed or assisted by virD. The short chain dehydrogenase virG then converts salicylaldehyde 5-deoxyaurocitrin into virensol B which is further hydroxylated by the cytochrome P450 monooxygenase virE to yield the hydroquinone virensol A. VirI then may oxidize virensol A to form the quinone, while virH performs the epoxidation. Finally, the two remaining short-chain dehydrogenases, virK and virL, are probably responsible for reducing the ketones to the corresponding alcohols to furnish the epoxycyclohexanol structure in trichoxide. This Hypocrea virens (strain Gv29-8 / FGSC 10586) (Gliocladium virens) protein is Cupin-domain-containing oxidoreductase virC.